Reading from the N-terminus, the 200-residue chain is Charged multivesicular body protein 6-B (200 aa).

A lipid anchor (N-myristoyl glycine) is attached at Gly-2. Positions 9–102 (RRSRVTEQDK…FAQIEMKVIE (94 aa)) form a coiled coil. The tract at residues 165–200 (QEDLELPEAPSEPLSDTVPEKQAVKNRPKPQLVAAS) is disordered. The Type-2 MIT-interacting motif signature appears at 168 to 179 (LELPEAPSEPLS).

This sequence belongs to the SNF7 family. As to quaternary structure, probable core component of the endosomal sorting required for transport complex III (ESCRT-III). ESCRT-III components are thought to multimerize to form a flat lattice on the perimeter membrane of the endosome.

It localises to the endomembrane system. Its subcellular location is the late endosome membrane. In terms of biological role, probable core component of the endosomal sorting required for transport complex III (ESCRT-III) which is involved in multivesicular bodies (MVBs) formation and sorting of endosomal cargo proteins into MVBs. MVBs contain intraluminal vesicles (ILVs) that are generated by invagination and scission from the limiting membrane of the endosome and mostly are delivered to lysosomes enabling degradation of membrane proteins, such as stimulated growth factor receptors, lysosomal enzymes and lipids. In the ESCRT-III complex, it probably serves as an acceptor for the ESCRT-II complex on endosomal membranes. This chain is Charged multivesicular body protein 6-B (chmp6-b), found in Xenopus laevis (African clawed frog).